Reading from the N-terminus, the 144-residue chain is Grifin (144 aa).

The region spanning phenylalanine 5–alanine 133 is the Galectin domain. Residue serine 138 is modified to Phosphoserine.

In terms of assembly, homodimer. In terms of tissue distribution, lens-specific. Located at the interface between lens fiber cells (at protein level).

In Rattus norvegicus (Rat), this protein is Grifin (Grifin).